The primary structure comprises 228 residues: DNA mismatch repair protein MutH (228 aa).

The protein belongs to the MutH family.

It is found in the cytoplasm. In terms of biological role, sequence-specific endonuclease that cleaves unmethylated GATC sequences. It is involved in DNA mismatch repair. In Serratia proteamaculans (strain 568), this protein is DNA mismatch repair protein MutH.